The chain runs to 390 residues: DNA replication and repair protein RecF (390 aa).

30–37 provides a ligand contact to ATP; it reads GDNAQGKS.

The protein belongs to the RecF family.

The protein localises to the cytoplasm. Its function is as follows. The RecF protein is involved in DNA metabolism; it is required for DNA replication and normal SOS inducibility. RecF binds preferentially to single-stranded, linear DNA. It also seems to bind ATP. The protein is DNA replication and repair protein RecF of Trichodesmium erythraeum (strain IMS101).